Reading from the N-terminus, the 72-residue chain is Heat shock factor-binding protein 1-like protein 1 (72 aa).

The stretch at 12–66 forms a coiled coil; the sequence is DLLQNAAENLLQEVEEHFQALTATLNLRMEEMGNRIEDLQRNVDDLMAQAGIENS.

Belongs to the HSBP1 family.

The sequence is that of Heat shock factor-binding protein 1-like protein 1 (Hsbp1l1) from Rattus norvegicus (Rat).